We begin with the raw amino-acid sequence, 147 residues long: Hemoglobin subunit delta (147 aa).

The 145-residue stretch at 3 to 147 folds into the Globin domain; the sequence is HLTGEEKAAV…VANALAHKYH (145 aa). Heme b contacts are provided by H64 and H93.

The protein belongs to the globin family. As to quaternary structure, heterotetramer of two delta chains and two alpha chains. In terms of tissue distribution, red blood cells.

This chain is Hemoglobin subunit delta (HBD), found in Ailuropoda melanoleuca (Giant panda).